A 120-amino-acid chain; its full sequence is Large ribosomal subunit protein uL18 (120 aa).

This sequence belongs to the universal ribosomal protein uL18 family. As to quaternary structure, part of the 50S ribosomal subunit; part of the 5S rRNA/L5/L18/L25 subcomplex. Contacts the 5S and 23S rRNAs.

This is one of the proteins that bind and probably mediate the attachment of the 5S RNA into the large ribosomal subunit, where it forms part of the central protuberance. The polypeptide is Large ribosomal subunit protein uL18 (Methylobacterium radiotolerans (strain ATCC 27329 / DSM 1819 / JCM 2831 / NBRC 15690 / NCIMB 10815 / 0-1)).